The primary structure comprises 207 residues: uncharacterized protein (207 aa).

A helical transmembrane segment spans residues 177 to 197 (LILAIGFIIGILLPTFFILLG).

It is found in the membrane. This is an uncharacterized protein from Haemophilus influenzae (strain ATCC 51907 / DSM 11121 / KW20 / Rd).